We begin with the raw amino-acid sequence, 343 residues long: Armadillo repeat-containing protein 10 (343 aa).

The chain crosses the membrane as a helical span at residues 5–27; the sequence is RGAGWVAAGLLLGAGACYCIYRL. The tract at residues 43–83 is disordered; it reads SKSAGALEEGTSEGQLCGRSARPQTGGTWESQWSKTSQPED. A Phosphoserine modification is found at Ser-45. Phosphothreonine is present on Glu-50. Positions 64-82 are enriched in polar residues; sequence RPQTGGTWESQWSKTSQPE. Residue Thr-85 is modified to Phosphothreonine. Residues 138–180 form an ARM repeat; sequence GGIPIVANKINHSNQSIKEKALNALNNLSVNVENQIKIKIYIS.

In terms of assembly, interacts with the DNA-binding domain of p53/TP53. Expressed in all tissues tested with higher expression in placenta, liver, kidney, heart and brain.

The protein resides in the endoplasmic reticulum membrane. The protein localises to the mitochondrion outer membrane. Functionally, may play a role in cell survival and cell growth. May suppress the transcriptional activity of p53/TP53. This is Armadillo repeat-containing protein 10 (ARMC10) from Homo sapiens (Human).